The following is a 450-amino-acid chain: Eukaryotic translation initiation factor 3 subunit E (450 aa).

Residues 255-424 (TELFFSPAYI…GTVIMNHPPQ (170 aa)) enclose the PCI domain.

It belongs to the eIF-3 subunit E family. Component of the eukaryotic translation initiation factor 3 (eIF-3) complex.

The protein resides in the cytoplasm. In terms of biological role, component of the eukaryotic translation initiation factor 3 (eIF-3) complex, which is involved in protein synthesis of a specialized repertoire of mRNAs and, together with other initiation factors, stimulates binding of mRNA and methionyl-tRNAi to the 40S ribosome. The eIF-3 complex specifically targets and initiates translation of a subset of mRNAs involved in cell proliferation. The chain is Eukaryotic translation initiation factor 3 subunit E (int6) from Aspergillus clavatus (strain ATCC 1007 / CBS 513.65 / DSM 816 / NCTC 3887 / NRRL 1 / QM 1276 / 107).